The following is a 152-amino-acid chain: Homeobox protein ceh-63 (152 aa).

Residues 21–30 show a composition bias toward polar residues; sequence NDTNSSQQIK. 2 disordered regions span residues 21-48 and 92-126; these read NDTN…RTTF and RRTK…SQHV. Over residues 35 to 44 the composition is skewed to basic residues; that stretch reads PPKRSNRPTK. Residues 41-100 constitute a DNA-binding region (homeobox); it reads RPTKRTTFTSEQVTLLELEFAKNEYICKDRRGELAQTIELTECQVKTWFQNRRTKKRRCT. Over residues 116-126 the composition is skewed to polar residues; it reads PSPQNPSSQHV.

As to quaternary structure, may interact with homeobox protein ceh-14.

It localises to the nucleus. In terms of biological role, probable transcription factor, modulating expression of helix-loop-helix protein mbr-1, perhaps acting in concert with homeobox protein ceh-14. May play a minor role in axon guidance in the DVC interneuron. The protein is Homeobox protein ceh-63 of Caenorhabditis elegans.